A 79-amino-acid polypeptide reads, in one-letter code: Acyl carrier protein (79 aa).

Positions 2–77 constitute a Carrier domain; the sequence is STIEERVKKI…QAIDYVKSHV (76 aa). Ser-37 carries the post-translational modification O-(pantetheine 4'-phosphoryl)serine.

It belongs to the acyl carrier protein (ACP) family. Post-translationally, 4'-phosphopantetheine is transferred from CoA to a specific serine of apo-ACP by AcpS. This modification is essential for activity because fatty acids are bound in thioester linkage to the sulfhydryl of the prosthetic group.

Its subcellular location is the cytoplasm. The protein operates within lipid metabolism; fatty acid biosynthesis. Functionally, carrier of the growing fatty acid chain in fatty acid biosynthesis. In Xanthomonas oryzae pv. oryzae (strain MAFF 311018), this protein is Acyl carrier protein.